A 421-amino-acid polypeptide reads, in one-letter code: Gamma-glutamyl phosphate reductase (421 aa).

It belongs to the gamma-glutamyl phosphate reductase family.

The protein resides in the cytoplasm. The catalysed reaction is L-glutamate 5-semialdehyde + phosphate + NADP(+) = L-glutamyl 5-phosphate + NADPH + H(+). The protein operates within amino-acid biosynthesis; L-proline biosynthesis; L-glutamate 5-semialdehyde from L-glutamate: step 2/2. In terms of biological role, catalyzes the NADPH-dependent reduction of L-glutamate 5-phosphate into L-glutamate 5-semialdehyde and phosphate. The product spontaneously undergoes cyclization to form 1-pyrroline-5-carboxylate. The chain is Gamma-glutamyl phosphate reductase from Ruegeria sp. (strain TM1040) (Silicibacter sp.).